The sequence spans 688 residues: Sodium channel and clathrin linker 1 (688 aa).

Ala-2 carries the N-acetylalanine modification. 2 coiled-coil regions span residues 59 to 108 (LIAE…AVEK) and 152 to 673 (QTAS…SVIT). At Ser-681 the chain carries Phosphoserine.

Interacts with SCN10A and clathrin. Identified in a complex containing SCN10A, clathrin and SCLT1.

It localises to the cytoplasm. It is found in the cytoskeleton. The protein resides in the microtubule organizing center. Its subcellular location is the centrosome. The protein localises to the centriole. Functionally, adapter protein that links SCN10A to clathrin. Regulates SCN10A channel activity, possibly by promoting channel internalization. This chain is Sodium channel and clathrin linker 1 (Sclt1), found in Mus musculus (Mouse).